Consider the following 116-residue polypeptide: Ribosome-binding factor A (116 aa).

It belongs to the RbfA family. As to quaternary structure, monomer. Binds 30S ribosomal subunits, but not 50S ribosomal subunits or 70S ribosomes.

The protein resides in the cytoplasm. Its function is as follows. One of several proteins that assist in the late maturation steps of the functional core of the 30S ribosomal subunit. Associates with free 30S ribosomal subunits (but not with 30S subunits that are part of 70S ribosomes or polysomes). Required for efficient processing of 16S rRNA. May interact with the 5'-terminal helix region of 16S rRNA. This Streptococcus pneumoniae (strain Hungary19A-6) protein is Ribosome-binding factor A.